A 582-amino-acid chain; its full sequence is MGSDSTLSLPSSSPPCNNRSSVPPTFTTRIFSDVAGDIIVVVDGESFLLHKFPLVARSGKMRKMVRDLKDSSSMIELRDFPGGPSTFELTMKFCYGINFDITAFNVVSLRCAAGYLEMTEDYKEQNLIFRAENYLDQIVFRSFHESVLVLCSCETQEIAETYEIPDRCVEAIAMNACRKQLVSGLSEELKGRDCLEMWTEELSALGIDYYVQVVSAMARLSVRSESIVASLVHYAKTSLKGIIDRNCQEQRKIVEAMVNLLPNDEKGSYSLSIIPLGFLFGMLKVGTIIDIEISCRLELERRIGHQLETASLDDLLIPSVQNEDSMYDVDTVHRILTFFLERIEEEDDECGYDSDSTGQHSSLLKVGRIMDAYLVEIAPDPYLSLHKFTAIIETLPEHSRIVDDGIYRAIDMYLKAHPLLTEEERKKLCNFIDCKKLSQEASNHVAQNDRLPVQMVVRVLYTEQLRLKKALSGDSEEGSWVLPSGVQSRAVSPRDTYAALRRENRELKLEISRMRVRVSELEKEHNLMKHEMMEKSGNNGGTFLTSLSKGIGRIATFGGETRQKVNRKSRSVSERKSSRSGR.

Residues 1-21 are disordered; that stretch reads MGSDSTLSLPSSSPPCNNRSS. Residues 36 to 103 form the BTB domain; the sequence is GDIIVVVDGE…CYGINFDITA (68 aa). An NPH3 domain is found at 196–466; that stretch reads EMWTEELSAL…VRVLYTEQLR (271 aa). Tyrosine 407 is modified (phosphotyrosine). Residues 558–582 are disordered; it reads GGETRQKVNRKSRSVSERKSSRSGR. Residues 571 to 582 show a composition bias toward basic and acidic residues; the sequence is SVSERKSSRSGR.

Belongs to the NPH3 family.

The protein operates within protein modification; protein ubiquitination. May act as a substrate-specific adapter of an E3 ubiquitin-protein ligase complex (CUL3-RBX1-BTB) which mediates the ubiquitination and subsequent proteasomal degradation of target proteins. The protein is Putative BTB/POZ domain-containing protein At3g08660 of Arabidopsis thaliana (Mouse-ear cress).